Reading from the N-terminus, the 490-residue chain is Glutamyl-tRNA(Gln) amidotransferase subunit A (490 aa).

Catalysis depends on charge relay system residues Lys78 and Ser158. The interval Ser131–Ser159 is disordered. The active-site Acyl-ester intermediate is Ser182.

It belongs to the amidase family. GatA subfamily. As to quaternary structure, heterotrimer of A, B and C subunits.

The enzyme catalyses L-glutamyl-tRNA(Gln) + L-glutamine + ATP + H2O = L-glutaminyl-tRNA(Gln) + L-glutamate + ADP + phosphate + H(+). Allows the formation of correctly charged Gln-tRNA(Gln) through the transamidation of misacylated Glu-tRNA(Gln) in organisms which lack glutaminyl-tRNA synthetase. The reaction takes place in the presence of glutamine and ATP through an activated gamma-phospho-Glu-tRNA(Gln). This chain is Glutamyl-tRNA(Gln) amidotransferase subunit A, found in Hyphomonas neptunium (strain ATCC 15444).